The primary structure comprises 328 residues: Type II secretion system protein K (328 aa).

A propeptide spans 1-7 (MRSRQRG) (leader sequence). A helical membrane pass occupies residues 8 to 28 (AALLVVLLILALMVTIAAVIT). Over 29 to 328 (ERTGKAFLRT…QYGGYRTVNP (300 aa)) the chain is Periplasmic.

Belongs to the GSP K family. Type II secretion is composed of four main components: the outer membrane complex, the inner membrane complex, the cytoplasmic secretion ATPase and the periplasm-spanning pseudopilus. Interacts with core component OutG. Cleaved by prepilin peptidase.

Its subcellular location is the cell inner membrane. In terms of biological role, component of the type II secretion system required for the energy-dependent secretion of extracellular factors such as proteases and toxins from the periplasm. Plays a role in pseudopilus assembly and seems to control its length. Interacts with the pseudopilus tip complex that is critical for the recognition and binding of secretion substrates. The chain is Type II secretion system protein K (outK) from Pectobacterium carotovorum subsp. carotovorum (Erwinia carotovora subsp. carotovora).